Consider the following 316-residue polypeptide: Alpha- and gamma-adaptin-binding protein p34 (316 aa).

Residues 198-232 (ASAESCHSEQQEPSPTAERTESLPGHHSGACGSAG) form a disordered region. Over residues 222-232 (GHHSGACGSAG) the composition is skewed to low complexity. 2 positions are modified to phosphoserine: Ser311 and Ser312.

As to quaternary structure, associated with AP-1 and AP-2 complexes.

It is found in the cytoplasm. It localises to the cytosol. May be involved in endocytic recycling of growth factor receptors such as EGFR. This Mus musculus (Mouse) protein is Alpha- and gamma-adaptin-binding protein p34 (Aagab).